The chain runs to 652 residues: Gametogenetin (652 aa).

Disordered regions lie at residues 1 to 39 (MGNLQSEPSAGGGSRKVQPSDRAPDSRRTSLVEPEMTSQ), 52 to 237 (PGSA…DSES), 251 to 273 (PSLAPPAASSSLAAKASLGGGGG), 291 to 473 (QGPL…GHKE), and 488 to 576 (LAAD…GAAN). Composition is skewed to basic and acidic residues over residues 18 to 30 (QPSDRAPDSRRTS) and 124 to 133 (RLLEASHRGQ). Positions 123 to 486 (RRLLEASHRG…APTAAPALPP (364 aa)) are interaction with GGNBP1. Composition is skewed to pro residues over residues 138–149 (SLRPLKPPPPPR) and 163–178 (QFPPPLETWKPPPPLP). Residues 201-212 (ESQAGPRNQGQT) are compositionally biased toward polar residues. Low complexity-rich tracts occupy residues 213-230 (AGRARGGAPPHAGEGEMA), 251-267 (PSLAPPAASSSLAAKAS), and 299-312 (ARPLGEVSRGAQEA). The residue at position 389 (serine 389) is a Phosphoserine. A compositionally biased stretch (low complexity) spans 407–422 (APALLAPPTFIFPAPT). Composition is skewed to pro residues over residues 428–466 (RPGPPGLQELPPLPPPTPPPTLQPPALQPTPLPVAPPLT) and 495–513 (APSPAPAPTVAEPSPPVSA). The interval 491–652 (DQAPAPSPAP…HYDLQATHSN (162 aa)) is interactions with ZNF403/GGNBP2 and OAZ3. Over residues 523-532 (TRTRRNKGSR) the composition is skewed to basic residues. A compositionally biased stretch (basic and acidic residues) spans 538 to 552 (TRKDGLHGDGPRERA).

In terms of assembly, interacts with FANCL, GGNBP1 and ZNF403/GGNBP2.

Its function is as follows. May be involved in spermatogenesis. This Homo sapiens (Human) protein is Gametogenetin (GGN).